Consider the following 291-residue polypeptide: Phosphatidylserine decarboxylase proenzyme (291 aa).

Active-site charge relay system; for autoendoproteolytic cleavage activity residues include Asp93, His150, and Ser253. Catalysis depends on Ser253, which acts as the Schiff-base intermediate with substrate; via pyruvic acid; for decarboxylase activity. Ser253 is subject to Pyruvic acid (Ser); by autocatalysis.

Belongs to the phosphatidylserine decarboxylase family. PSD-B subfamily. Prokaryotic type I sub-subfamily. Heterodimer of a large membrane-associated beta subunit and a small pyruvoyl-containing alpha subunit. The cofactor is pyruvate. Is synthesized initially as an inactive proenzyme. Formation of the active enzyme involves a self-maturation process in which the active site pyruvoyl group is generated from an internal serine residue via an autocatalytic post-translational modification. Two non-identical subunits are generated from the proenzyme in this reaction, and the pyruvate is formed at the N-terminus of the alpha chain, which is derived from the carboxyl end of the proenzyme. The autoendoproteolytic cleavage occurs by a canonical serine protease mechanism, in which the side chain hydroxyl group of the serine supplies its oxygen atom to form the C-terminus of the beta chain, while the remainder of the serine residue undergoes an oxidative deamination to produce ammonia and the pyruvoyl prosthetic group on the alpha chain. During this reaction, the Ser that is part of the protease active site of the proenzyme becomes the pyruvoyl prosthetic group, which constitutes an essential element of the active site of the mature decarboxylase.

It localises to the cell membrane. The catalysed reaction is a 1,2-diacyl-sn-glycero-3-phospho-L-serine + H(+) = a 1,2-diacyl-sn-glycero-3-phosphoethanolamine + CO2. The protein operates within phospholipid metabolism; phosphatidylethanolamine biosynthesis; phosphatidylethanolamine from CDP-diacylglycerol: step 2/2. Catalyzes the formation of phosphatidylethanolamine (PtdEtn) from phosphatidylserine (PtdSer). In Alcanivorax borkumensis (strain ATCC 700651 / DSM 11573 / NCIMB 13689 / SK2), this protein is Phosphatidylserine decarboxylase proenzyme.